Consider the following 317-residue polypeptide: MYDWLNALPKAELHLHLEGSLEPELLFALAERNRIALPWDDVETLRKAYAFNNLQEFLDLYYRGADVLRTEQDFYDLTWAYLLRCKAQNVVHTEPFFDPQTHTDRGIPFEVVLAGITGALKDGKSKLGVDSGLILSFLRHLSQEEAEKTLDQALPFRDAFVAVGLDSSEMGHPPSKFQRVFDRARNEGFLTVAHAGEEGPPEYIWEALDLLKIQRIDHGVRAIEDERLMQRIIDEQIPLTVCPLSNTKLCVFDDMAQHNILDMLERGVKVTVNSDDPAYFGGYVTENFHALYTHLGMTEDQAKRLAQNSLDARLVKP.

Zn(2+) contacts are provided by His14, His16, and His194. Glu197 serves as the catalytic Proton donor. Zn(2+) is bound at residue Asp275. Residue Asp276 participates in substrate binding.

Belongs to the metallo-dependent hydrolases superfamily. Adenosine and AMP deaminases family. Adenine deaminase type 2 subfamily. Zn(2+) serves as cofactor.

The enzyme catalyses adenine + H2O + H(+) = hypoxanthine + NH4(+). In terms of biological role, catalyzes the hydrolytic deamination of adenine to hypoxanthine. Plays an important role in the purine salvage pathway and in nitrogen catabolism. The sequence is that of Adenine deaminase from Pseudomonas syringae pv. syringae (strain B728a).